The primary structure comprises 777 residues: Intraflagellar transport protein 80 homolog (777 aa).

7 WD repeats span residues K12–I50, A104–L143, Q145–K185, A186–S225, P227–E265, P267–K306, and K504–R542.

In terms of assembly, component of the IFT complex B, at least composed of IFT20, IFT22, IFT25, IFT27, IFT46, IFT52, TRAF3IP1/IFT54, IFT57, IFT74, IFT80, IFT81, and IFT88. Interacts with IFT88. Interacts with IFT57 and IFT70B.

The protein localises to the cytoplasm. Its subcellular location is the cytoskeleton. It is found in the cilium basal body. It localises to the cilium axoneme. In terms of biological role, component of the intraflagellar transport (IFT) complex B, which is essential for the development and maintenance of motile and sensory cilia. This Mus musculus (Mouse) protein is Intraflagellar transport protein 80 homolog (Ift80).